Here is a 179-residue protein sequence, read N- to C-terminus: MSRIGKLPITVPSGVEVTIDGQDVTVKGPKGSLVQRIAEPITVEKDDDGAILVKRPDDERNSRSLHGLSRSLVNNMVVGVSQGYQKDLEIHGVGYRVQQKGSNLEFALGYSHPVVVEPPEGIEFATDGPTKLSVKGIDKQLVGEIAARIRKLRRPDPYKGKGVRYAGENIRRKVGKTGK.

It belongs to the universal ribosomal protein uL6 family. In terms of assembly, part of the 50S ribosomal subunit.

Functionally, this protein binds to the 23S rRNA, and is important in its secondary structure. It is located near the subunit interface in the base of the L7/L12 stalk, and near the tRNA binding site of the peptidyltransferase center. This is Large ribosomal subunit protein uL6 from Saccharopolyspora erythraea (strain ATCC 11635 / DSM 40517 / JCM 4748 / NBRC 13426 / NCIMB 8594 / NRRL 2338).